The following is a 486-amino-acid chain: Bifunctional protein HldE (486 aa).

The segment at M1 to A331 is ribokinase. ATP is bound at residue N208–E211. D277 is a catalytic residue. The segment at F357–S486 is cytidylyltransferase.

It in the N-terminal section; belongs to the carbohydrate kinase PfkB family. The protein in the C-terminal section; belongs to the cytidylyltransferase family. As to quaternary structure, homodimer.

The enzyme catalyses D-glycero-beta-D-manno-heptose 7-phosphate + ATP = D-glycero-beta-D-manno-heptose 1,7-bisphosphate + ADP + H(+). It carries out the reaction D-glycero-beta-D-manno-heptose 1-phosphate + ATP + H(+) = ADP-D-glycero-beta-D-manno-heptose + diphosphate. Its pathway is nucleotide-sugar biosynthesis; ADP-L-glycero-beta-D-manno-heptose biosynthesis; ADP-L-glycero-beta-D-manno-heptose from D-glycero-beta-D-manno-heptose 7-phosphate: step 1/4. It functions in the pathway nucleotide-sugar biosynthesis; ADP-L-glycero-beta-D-manno-heptose biosynthesis; ADP-L-glycero-beta-D-manno-heptose from D-glycero-beta-D-manno-heptose 7-phosphate: step 3/4. Catalyzes the phosphorylation of D-glycero-D-manno-heptose 7-phosphate at the C-1 position to selectively form D-glycero-beta-D-manno-heptose-1,7-bisphosphate. Functionally, catalyzes the ADP transfer from ATP to D-glycero-beta-D-manno-heptose 1-phosphate, yielding ADP-D-glycero-beta-D-manno-heptose. The sequence is that of Bifunctional protein HldE from Acidiphilium cryptum (strain JF-5).